Consider the following 1031-residue polypeptide: Receptor-like protein EIX1 (1031 aa).

Residues 1 to 29 form the signal peptide; the sequence is MDKWKYARLAQFLFTLSLLFLETSFGLGG. A glycan (N-linked (GlcNAc...) asparagine) is linked at asparagine 30. Residues 30–113 are N-cap; that stretch reads NKTLCLDKER…PRLTGKLSPS (84 aa). At 30–971 the chain is on the extracellular side; the sequence is NKTLCLDKER…DEEEEFPSLE (942 aa). Residues 117–140 form an LRR 1 repeat; it reads LEYLNYLDLSVNEFERSEIPRFIG. One copy of the LRR 2; degenerate repeat lies at 142–165; it reads LKRLEYLNLSASFFSGVIPIQFQN. 2 N-linked (GlcNAc...) asparagine glycosylation sites follow: asparagine 149 and asparagine 165. LRR repeat units lie at residues 166–189, 191–215, 216–240, and 243–266; these read LTSLRTLDLGENNLIVKDLRWLSH, SSLEFLSLSSSNFQVNNWFQEITKV, PSLKELDLSGCGLSKLVPSQADLAN, and LISLSVLHLCCNEFSSSSEYSWVF. Asparagine 240 carries an N-linked (GlcNAc...) asparagine glycan. A glycan (N-linked (GlcNAc...) asparagine) is linked at asparagine 267. LRR repeat units lie at residues 269–292, 293–317, 318–341, 346–369, 370–393, 394–416, 417–440, 441–463, 465–487, 488–509, 512–536, 538–559, 561–584, and 586–611; these read TTSLTSIDLLYNQLSGQIDDRFGT, LMYLEHLDLANNLKIEGGVPSSFGN, LTRLRHLDMSNTQTVQWLPELFLR, RKSLEVLGLNENSLFGSIVNATRF, SSLKKLYLQKNMLNGSFMESAGQV, STLEYLDLSENQMRGALPDLALF, PSLRELHLGSNQFRGRIPQGIGKL, SQLRILDVSSNRLEGLPESMGQL, NLESFDASYNVLKGTITESHLSN, LSSLVDLDLSFNSLALKTSFNW, PFQLQVISLPSCNLGPSFPKWLQNQ, NYTVLDISLASISDTLPSWFSS, PPDLKILNLSNNQISGRVSDLIEN, and YGYRVIDLSYNNFSGALPLVPTNVQI. Asparagine 317 carries an N-linked (GlcNAc...) asparagine glycan. N-linked (GlcNAc...) asparagine glycans are attached at residues asparagine 365 and asparagine 383. An N-linked (GlcNAc...) asparagine glycan is attached at asparagine 487. 3 N-linked (GlcNAc...) asparagine glycosylation sites follow: asparagine 538, asparagine 568, and asparagine 597. Residues 612 to 629 form an LRR 21; degenerate repeat; it reads FYLHKNQFFGSISSICRS. 6 LRR repeats span residues 630-654, 655-678, 679-703, 705-725, 726-750, and 752-773; these read RTSPTSLDLSHNQFSGELPDCWMNM, TSLAVLNLAYNNFSGEIPHSLGSL, TNLKALYIRQNSLSGMLPSFSQCQG, QILDLGGNKLTGSIPGWIGTD, LLNLRILSLRFNRLHGSIPSIICQL, and FLQILDLSANGLSGKIPHCFNN. Asparagine 653 and asparagine 666 each carry an N-linked (GlcNAc...) asparagine glycan. Asparagine 773 and asparagine 781 each carry an N-linked (GlcNAc...) asparagine glycan. 4 LRR repeats span residues 823–847, 848–871, 872–895, and 896–918; these read LLYLKTIDLSSNELIGGVPKEIADM, RGLKSLNLSRNELNGTVIEGIGQM, RMLESLDMSRNQLSGVIPQDLANL, and TFLSVLDLSNNQLSGRIPSSTQL. 3 N-linked (GlcNAc...) asparagine glycosylation sites follow: asparagine 854, asparagine 861, and asparagine 894. The interval 919–971 is C-cap/acidic domain; that stretch reads QSFDRSSYSDNAQLCGPPLQECPGYAPPSPLIDHGSNNNPQEHDEEEEFPSLE. The helical transmembrane segment at 972 to 992 threads the bilayer; it reads FYISMVLSFFVAFWGILGCLI. At 993-1031 the chain is on the cytoplasmic side; it reads VNSSWRNAYFKFLTDTTSWLDMISRVWFARLKKKLRRAR.

This sequence belongs to the RLP family. In terms of assembly, interacts with EIX elicitor protein.

The protein resides in the cell membrane. In terms of biological role, involved in plant defense. Confers resistance to the fungal pathogen T.viride through recognition of the EIX elicitor protein. The protein is Receptor-like protein EIX1 of Solanum lycopersicum (Tomato).